The chain runs to 229 residues: Translation initiation factor 6 (229 aa).

The protein belongs to the eIF-6 family.

Functionally, binds to the 50S ribosomal subunit and prevents its association with the 30S ribosomal subunit to form the 70S initiation complex. This chain is Translation initiation factor 6, found in Thermococcus kodakarensis (strain ATCC BAA-918 / JCM 12380 / KOD1) (Pyrococcus kodakaraensis (strain KOD1)).